The chain runs to 202 residues: LexA repressor (202 aa).

Positions 28-48 form a DNA-binding region, H-T-H motif; sequence RAEIAQRLGFRSPNAAEEHLK. Catalysis depends on for autocatalytic cleavage activity residues S119 and K156.

This sequence belongs to the peptidase S24 family. As to quaternary structure, homodimer.

It catalyses the reaction Hydrolysis of Ala-|-Gly bond in repressor LexA.. In terms of biological role, represses a number of genes involved in the response to DNA damage (SOS response), including recA and lexA. Binds to the 16 bp palindromic sequence 5'-CTGTATATATATACAG-3'. In the presence of single-stranded DNA, RecA interacts with LexA causing an autocatalytic cleavage which disrupts the DNA-binding part of LexA, leading to derepression of the SOS regulon and eventually DNA repair. This chain is LexA repressor, found in Salmonella agona (strain SL483).